We begin with the raw amino-acid sequence, 227 residues long: Ribosomal RNA small subunit methyltransferase G (227 aa).

S-adenosyl-L-methionine contacts are provided by residues Gly-81, Leu-86, 131-132 (AE), and Arg-149.

The protein belongs to the methyltransferase superfamily. RNA methyltransferase RsmG family.

It localises to the cytoplasm. Functionally, specifically methylates the N7 position of guanine in position 518 of 16S rRNA. This is Ribosomal RNA small subunit methyltransferase G from Rhodococcus jostii (strain RHA1).